Here is a 317-residue protein sequence, read N- to C-terminus: Tenomodulin (317 aa).

At 1-30 the chain is on the cytoplasmic side; it reads MAKNPPENCEDCHILNAEAFKSKKICKSLK. A helical; Signal-anchor for type II membrane protein membrane pass occupies residues 31-50; that stretch reads ICGLVFGILALTLIVLFWGS. Over 51 to 317 the chain is Extracellular; that stretch reads KHFWPEVPKK…WWVARMLGRV (267 aa). The region spanning 93–186 is the BRICHOS domain; the sequence is GNGTDETLEV…ICDNVTMYWI (94 aa). N94 is a glycosylation site (N-linked (GlcNAc...) asparagine). C120 and C178 are joined by a disulfide. N180 carries an N-linked (GlcNAc...) asparagine glycan. S239 bears the Phosphoserine mark.

The protein belongs to the chondromodulin-1 family. Highly expressed in hypovascular connective tissues such as tendons. Also has strong expression in adipose tissue.

It localises to the membrane. Its subcellular location is the nucleus envelope. The protein resides in the cytoplasm. In terms of biological role, may be an angiogenesis inhibitor. This is Tenomodulin (TNMD) from Homo sapiens (Human).